We begin with the raw amino-acid sequence, 129 residues long: Natriuretic peptides B (129 aa).

The first 26 residues, 1–26, serve as a signal peptide directing secretion; the sequence is MDPQTALSRALLLLLFLHLSLLGCRS. A disulfide bond links Cys107 and Cys123.

This sequence belongs to the natriuretic peptide family. In terms of processing, the precursor molecule is proteolytically cleaved, possibly by FURIN or CORIN, to produce the active peptide. May undergo further proteolytic cleavage by various proteases such as DPP4, MME and possibly FAP, to give rise to a variety of shorter peptides. May be cleaved at Pro-99 by the prolyl endopeptidase FAP (seprase) activity (in vitro). May be degraded by IDE. During IDE degradation, the resulting products initially increase the activation of NPR1 and can also stimulate NPR2 to produce cGMP before the fragments are completely degraded and inactivated by IDE (in vitro).

Its subcellular location is the secreted. Its function is as follows. Cardiac hormone that plays a key role in mediating cardio-renal homeostasis. May also function as a paracrine antifibrotic factor in the heart. Acts by specifically binding and stimulating NPR1 to produce cGMP, which in turn activates effector proteins that drive various biological responses. Involved in regulating the extracellular fluid volume and maintaining the fluid-electrolyte balance through natriuresis, diuresis, vasorelaxation, and inhibition of renin and aldosterone secretion. Binds the clearance receptor NPR3. The chain is Natriuretic peptides B (NPPB) from Bos taurus (Bovine).